The sequence spans 310 residues: Putative S-adenosyl-L-methionine-dependent methyltransferase MUL_2766 (310 aa).

Residues Asp-131 and 160 to 161 (DL) each bind S-adenosyl-L-methionine.

This sequence belongs to the UPF0677 family.

In terms of biological role, exhibits S-adenosyl-L-methionine-dependent methyltransferase activity. This Mycobacterium ulcerans (strain Agy99) protein is Putative S-adenosyl-L-methionine-dependent methyltransferase MUL_2766.